Consider the following 439-residue polypeptide: Histidinol dehydrogenase (439 aa).

The NAD(+) site is built by Tyr127, Gln185, and Asn208. Substrate is bound by residues Ser234, Gln256, and His259. The Zn(2+) site is built by Gln256 and His259. Catalysis depends on proton acceptor residues Glu323 and His324. Substrate is bound by residues His324, Asp357, Glu411, and His416. Asp357 contributes to the Zn(2+) binding site. Residue His416 coordinates Zn(2+).

Belongs to the histidinol dehydrogenase family. Zn(2+) is required as a cofactor.

The catalysed reaction is L-histidinol + 2 NAD(+) + H2O = L-histidine + 2 NADH + 3 H(+). Its pathway is amino-acid biosynthesis; L-histidine biosynthesis; L-histidine from 5-phospho-alpha-D-ribose 1-diphosphate: step 9/9. In terms of biological role, catalyzes the sequential NAD-dependent oxidations of L-histidinol to L-histidinaldehyde and then to L-histidine. The protein is Histidinol dehydrogenase of Aliivibrio fischeri (strain ATCC 700601 / ES114) (Vibrio fischeri).